Reading from the N-terminus, the 139-residue chain is HTH-type transcriptional repressor Mb2911 (139 aa).

In terms of domain architecture, HTH marR-type spans 6 to 138 (DAPLGYLLYR…FKRMLEKLGS (133 aa)).

Homodimer.

Functionally, represses expression of the HQNO methyltransferase htm gene by binding to its promoter region. The sequence is that of HTH-type transcriptional repressor Mb2911 from Mycobacterium bovis (strain ATCC BAA-935 / AF2122/97).